The primary structure comprises 182 residues: Large ribosomal subunit protein uL5 (182 aa).

Belongs to the universal ribosomal protein uL5 family. As to quaternary structure, part of the 50S ribosomal subunit; part of the 5S rRNA/L5/L18/L25 subcomplex. Contacts the 5S rRNA and the P site tRNA. Forms a bridge to the 30S subunit in the 70S ribosome.

This is one of the proteins that bind and probably mediate the attachment of the 5S RNA into the large ribosomal subunit, where it forms part of the central protuberance. In the 70S ribosome it contacts protein S13 of the 30S subunit (bridge B1b), connecting the 2 subunits; this bridge is implicated in subunit movement. Contacts the P site tRNA; the 5S rRNA and some of its associated proteins might help stabilize positioning of ribosome-bound tRNAs. In Nostoc punctiforme (strain ATCC 29133 / PCC 73102), this protein is Large ribosomal subunit protein uL5.